Consider the following 414-residue polypeptide: Cyclin-B1-3 (414 aa).

The protein belongs to the cyclin family. Cyclin AB subfamily. As to expression, expressed in roots, stems and flowers.

The chain is Cyclin-B1-3 (CYCB1-3) from Arabidopsis thaliana (Mouse-ear cress).